A 732-amino-acid chain; its full sequence is Interleukin-31 receptor subunit alpha (732 aa).

The signal sequence occupies residues 1-19 (MMWTWALWMLPSLCKFSLA). Residues 20 to 519 (ALPAKPENIS…FKTLSFSVFE (500 aa)) are Extracellular-facing. 5 consecutive Fibronectin type-III domains span residues 24–122 (KPEN…IAKT), 124–225 (PPKI…TEEE), 223–315 (EEEA…PVAT), 319–416 (PAIQ…QAYA), and 421–515 (PSEG…TLSF). N-linked (GlcNAc...) asparagine glycosylation is found at N37, N67, N93, N166, N187, N277, N283, N395, N455, and N504. A helical transmembrane segment spans residues 520–540 (IILITSLIGGGLLILIILTVA). The Cytoplasmic portion of the chain corresponds to 541-732 (YGLKKPNKLT…KLPEHTKGEV (192 aa)).

This sequence belongs to the type I cytokine receptor family. Type 2 subfamily. Heterodimer with OSMR. Interacts with JAK1 and STAT3. Post-translationally, N-glycosylated. In terms of tissue distribution, expressed in CD14- and CD56-positive blood cells. Expressed in macrophages. Expressed in keratinocytes. Expressed in a subset of dorsal root ganglia neurons (at protein level). Expressed at low levels in testis, ovary, brain, prostate, placenta, thymus, bone marrow, trachea and skin. Expressed in bronchial and alveolar epithelial cells and pulmonary fibroblasts. Detected in all of the myelomonocytic lineage. Isoform 6: Expressed at higher levels in lesional skin compared to healthy skin of atopic dermatitis patients.

It is found in the cell membrane. The protein resides in the presynaptic cell membrane. Its subcellular location is the cell projection. It localises to the axon. Associates with OSMR to form the interleukin-31 receptor which activates STAT3 and to a lower extent STAT1 and STAT5. May function in skin immunity. Mediates IL31-induced itch, probably in a manner dependent on cation channels TRPA1 and TRPV1. Positively regulates numbers and cycling status of immature subsets of myeloid progenitor cells in bone marrow in vivo and enhances myeloid progenitor cell survival in vitro. The sequence is that of Interleukin-31 receptor subunit alpha (IL31RA) from Homo sapiens (Human).